A 167-amino-acid chain; its full sequence is MHIGRREMPRHRKARHCQRFVADSCRSTETHSQVEDRVVRALMEDDVDLWRKMKYMVISSKNNDDKTMDTMRKFCERVTMAEESVEDLYYEKKYVKRFDKDTDDYMGQVTLPSARELAAAMKVGGRIGERRRKRDERVNELERKELELCGYDLVDGQCVLTGNLTRE.

This is an uncharacterized protein from Magallana gigas (Pacific oyster).